A 68-amino-acid chain; its full sequence is Metallothionein (68 aa).

The protein belongs to the metallothionein superfamily. Type 4 family.

Functionally, metallothioneins have a high content of cysteine residues that bind various heavy metals. The chain is Metallothionein (MT1) from Lytechinus pictus (Painted sea urchin).